Here is a 67-residue protein sequence, read N- to C-terminus: DNA-directed RNA polymerase subunit omega (67 aa).

The protein belongs to the RNA polymerase subunit omega family. In terms of assembly, the RNAP catalytic core consists of 2 alpha, 1 beta, 1 beta' and 1 omega subunit. When a sigma factor is associated with the core the holoenzyme is formed, which can initiate transcription.

The enzyme catalyses RNA(n) + a ribonucleoside 5'-triphosphate = RNA(n+1) + diphosphate. Promotes RNA polymerase assembly. Latches the N- and C-terminal regions of the beta' subunit thereby facilitating its interaction with the beta and alpha subunits. The protein is DNA-directed RNA polymerase subunit omega of Albidiferax ferrireducens (strain ATCC BAA-621 / DSM 15236 / T118) (Rhodoferax ferrireducens).